A 123-amino-acid polypeptide reads, in one-letter code: RNA silencing suppressor (123 aa).

Residues 52 to 55 are basic; sequence KRRR. The C4-type zinc finger occupies 62–83; the sequence is CVRCFRVNPGFYFTKRCDGITC.

It belongs to the carlaviruses nucleic acid-binding protein family.

Functionally, suppressor of viral-induced RNA silencing. The potential mechanism of action is based on sequestering siRNAs. In Populus balsamifera (Balsam poplar), this protein is RNA silencing suppressor.